The primary structure comprises 130 residues: Immunoglobulin kappa chain variable 9-120 (130 aa).

The signal sequence occupies residues 1–22 (MDMRAPAQIFGFLLLLFQGTRC). Residues 23–45 (DIQMTQSPSSLSASLGERVSLTC) are framework-1. A disulfide bridge links cysteine 45 with cysteine 110. Residues 46–56 (RASQDIGSSLN) are complementarity-determining-1. The framework-2 stretch occupies residues 57-71 (WLQQEPDGTIKRLIY). The complementarity-determining-2 stretch occupies residues 72–78 (ATSSLDS). The tract at residues 79–110 (GVPKRFSGSRSGSDYSLTISSLESEDFVDYYC) is framework-3. The segment at 111–119 (LQYASSPWT) is complementarity-determining-3. Positions 120 to 129 (FGGGTKLEIK) are framework-4.

The polypeptide is Immunoglobulin kappa chain variable 9-120 (Mus musculus (Mouse)).